The chain runs to 647 residues: Putative lipase atg15 (647 aa).

Residues 1-18 are Cytoplasmic-facing; the sequence is MLPSGKRKADAFSCTSAA. The helical; Signal-anchor for type II membrane protein transmembrane segment at 19–39 threads the bilayer; sequence RVTAKLALSFLALSTTPLVNA. Residues 40 to 647 lie on the Lumenal side of the membrane; that stretch reads FSYEEPNAQI…EGGEGPVNDL (608 aa). 4 N-linked (GlcNAc...) asparagine glycosylation sites follow: Asn203, Asn225, Asn283, and Asn307. Ser323 functions as the Charge relay system in the catalytic mechanism. Asn469 is a glycosylation site (N-linked (GlcNAc...) asparagine). A disordered region spans residues 597 to 626; the sequence is APALPSSVLTPSATATPPEGQPDDSGKRCR.

The protein belongs to the AB hydrolase superfamily. Lipase family. Binds to both phosphatidylinositol (PI) and phosphatidylinositol 3,5-bisphosphate (PIP2).

It localises to the endosome. It is found in the multivesicular body membrane. Its subcellular location is the prevacuolar compartment membrane. The catalysed reaction is a triacylglycerol + H2O = a diacylglycerol + a fatty acid + H(+). Lipase which is essential for lysis of subvacuolar cytoplasm to vacuole targeted bodies and intravacuolar autophagic bodies. Involved in the lysis of intravacuolar multivesicular body (MVB) vesicles. The intravacuolar membrane disintegration by atg15 is critical to life span extension. The chain is Putative lipase atg15 (atg15) from Neurospora crassa (strain ATCC 24698 / 74-OR23-1A / CBS 708.71 / DSM 1257 / FGSC 987).